Here is an 89-residue protein sequence, read N- to C-terminus: Small ribosomal subunit protein bS20 (89 aa).

Disordered regions lie at residues 1–25 (MANIKSAIKRAKTSEKRRAHNASMK) and 69–89 (KNAASRQKSRLAKKLNSIQAS). Over residues 7–20 (AIKRAKTSEKRRAH) the composition is skewed to basic residues.

It belongs to the bacterial ribosomal protein bS20 family.

Functionally, binds directly to 16S ribosomal RNA. The protein is Small ribosomal subunit protein bS20 of Geobacillus thermodenitrificans (strain NG80-2).